The sequence spans 174 residues: Large ribosomal subunit protein bL12cy (174 aa).

The transit peptide at 1-45 directs the protein to the chloroplast; sequence MASTTFSSAFSILSLPSSSPSPPPWAPRTLPVANRRRRAAAVAST.

The protein belongs to the bacterial ribosomal protein bL12 family.

The protein localises to the plastid. Its subcellular location is the chloroplast. The protein is Large ribosomal subunit protein bL12cy (RPL12-2) of Secale cereale (Rye).